The primary structure comprises 1446 residues: MSKQQRRKGNAKNASSAAAHEYLAQGGATFVGLTPEMNIFEVASSNRLHQVVEIDDETRIVMKKLTKKDCQTREKGLKELMELINTENSSIESSYEHFCGLVAQLTTDGSPTVRMLTMKVISQFLTKLKKSASKGLKKIIPFVLFAKSDVTNGVAAAASAVIRDGFDADKKRQVVELFVPNTFDLAAKIAEGKHELSLPAEYDASEDLETRKMRLETQSLNTFLSYIKEYGNESKLWEEPARKLFSNSEFIKKTFAGKKEALKVQLLNISYKFSDNIEVILSNPVISTYIQASLDAQTFSTECATAWEGILILLPDERFHAKCSLQKGIYPRLLNLIRKKGNHWRVLKHYLLPAVSVLLQKLENPALITSIITSFTDNLPWQAEASMNAIHCWFCTFSDFVKWILGNDRINLEILKDLSPLIVEMSNQSMHFNTAEATECISGLIHWIIEKKVLENPAEFFDLLKTSIYEVAPPEKSRLFADSLTLPAKHLELAHLHGNLLSNPDVDFHIIRNLARASNSEYFEETCRNINNFEFIENSDRFDMLQAVEIVKLIEMKPSLSLQIKNNHVGRQLLLSENSEIWEKSLKNVPAGVFQEMVNFWHEKRNGKAIAQAVNFLKKMGIQLDTNAAAENVDFLISLLQSLDSKEDPEERKNLVLKLLSALFDAEDEPKLEHFESLKSHLNGDFEQFFEKLFANMEEEDAERVLEIAARFDKLVGFCDADSRGEIAGKMILGRREFDEMSEKLHFLELDVLTVSQHTTIITDALSRPIEHLEEKEATKMVKELGRLALFSVASNYNSSIHQLFAWQMIRVISALGNRYCLKFLDEELQQLRIELEKRVIKSEEIQKLINDGCCCAPNFITDTYGIPEKRQKFEEYSEDMDTKIETIYLKTDTPLEYVEKVFEASQSENSFPLFQFDQSKKYEWLANLTFVKRFIQCGGEIFRAENLEFRDFTLCGIITVLDTSTDILIDSPHSFSENPLLEALTTLYLELFVVLTDATKRGAYSEQSVEEWNEFYTPTIHTYCIRLFRTIRRDQQPTPFVRALLRALFVISEFPTSFSNDDDVANQEFIPELSVFKYPAFQESCIAQAFSLFASNNEHIQLIAYSVARLLMPIMFKLENAAALKSNEDSELPVSTNRRKLSLPVMISKSYPKDHHNPHVGPLLLDLTLLPLENTKDSGFSQEHRVAYCDVIDPFFKNALNALMLDQPFEFRQVPIGCRIPKSQERAYYLESDLSASPIFFDKFASRLLFKSMTLLPAAIRLFYKGMPNCFMPMFQETVTKYASRLLIEQELGKVREAKFEGEMKVRTVPVTGEIIAEYVVEETKMKLTIGLPPDYPLSVPSLTLDKAIVKTDRAKKWLLQLNAYLFHQNGAILEGIEMWKRNVDKGVEGVEDCTICMMTVHQQTHQLPKIKCKQCKNKFHSNCLYKWFESSNQSTCPLCRNNFT.

11 HEAT repeats span residues 71–108 (QTRE…LTTD), 115–153 (MLTM…VTNG), 324–361 (SLQK…LLQK), 363–399 (ENPA…TFSD), 413–450 (EILK…WIIE), 630–669 (AENV…AEDE), 684–721 (GDFE…FCDA), 1046–1083 (LRAL…PAFQ), 1107–1144 (SVAR…KLSL), 1165–1202 (LLDL…NALN), and 1251–1289 (FKSM…RLLI). The RING-type zinc finger occupies 1395–1442 (CTICMMTVHQQTHQLPKIKCKQCKNKFHSNCLYKWFESSNQSTCPLCR).

Belongs to the LTN1 family. As to quaternary structure, component of the ribosome quality control complex (RQC), composed of at least the E3 ubiquitin ligase ltn1 and nemf. The complex probably also contains tcf25 as well as vcp/p97 and its ubiquitin-binding cofactors. RQC forms a stable complex with 60S ribosomal subunits.

The protein resides in the cytoplasm. Its subcellular location is the cytosol. It carries out the reaction S-ubiquitinyl-[E2 ubiquitin-conjugating enzyme]-L-cysteine + [acceptor protein]-L-lysine = [E2 ubiquitin-conjugating enzyme]-L-cysteine + N(6)-ubiquitinyl-[acceptor protein]-L-lysine.. The protein operates within protein modification; protein ubiquitination. E3 ubiquitin-protein ligase. Component of the ribosome quality control complex (RQC), a ribosome-associated complex that mediates ubiquitination and extraction of incompletely synthesized nascent chains for proteasomal degradation. Ubiquitination leads to vcp/p97 recruitment for extraction and degradation of the incomplete translation product. This Caenorhabditis elegans protein is E3 ubiquitin-protein ligase listerin.